The primary structure comprises 178 residues: Alkyl hydroperoxide reductase AhpD (178 aa).

Cys130 (proton donor) is an active-site residue. An intrachain disulfide couples Cys130 to Cys133. The active-site Cysteine sulfenic acid (-SOH) intermediate is Cys133.

Belongs to the AhpD family. In terms of assembly, homotrimer.

The enzyme catalyses N(6)-[(R)-dihydrolipoyl]-L-lysyl-[lipoyl-carrier protein] + a hydroperoxide = N(6)-[(R)-lipoyl]-L-lysyl-[lipoyl-carrier protein] + an alcohol + H2O. In terms of biological role, antioxidant protein with alkyl hydroperoxidase activity. Required for the reduction of the AhpC active site cysteine residues and for the regeneration of the AhpC enzyme activity. This Mycobacterium ulcerans (strain Agy99) protein is Alkyl hydroperoxide reductase AhpD.